The following is a 1147-amino-acid chain: Lon protease homolog 2, peroxisomal (1147 aa).

A Lon N-terminal domain is found at 20-348 (LPTYKLDSNL…EVNRMLESMI (329 aa)). Disordered regions lie at residues 395–444 (KPDK…DDDD) and 561–626 (KIES…SLTT). Residues 427 to 444 (DGNESNDEYDDDEDDDDD) show a composition bias toward acidic residues. Composition is skewed to basic and acidic residues over residues 561 to 574 (KIES…KKNE) and 582 to 597 (KNDK…RSDD). Residue 651–658 (GPPGTGKT) coordinates ATP. A Lon proteolytic domain is found at 903–1131 (SAKCGVVNGL…WDVIKAVWGD (229 aa)). Active-site residues include S1006 and K1049.

It belongs to the peptidase S16 family.

It is found in the peroxisome matrix. It catalyses the reaction Hydrolysis of proteins in presence of ATP.. ATP-dependent serine protease that mediates the selective degradation of misfolded and unassembled polypeptides in the peroxisomal matrix. Necessary for type 2 peroxisome targeting signal (PTS2)-containing protein processing and facilitates peroxisome matrix protein import. This chain is Lon protease homolog 2, peroxisomal, found in Debaryomyces hansenii (strain ATCC 36239 / CBS 767 / BCRC 21394 / JCM 1990 / NBRC 0083 / IGC 2968) (Yeast).